Here is a 237-residue protein sequence, read N- to C-terminus: Oligoribonuclease, mitochondrial (237 aa).

The N-terminal 25 residues, 1 to 25 (MLGGSLGSRLLRGVGGSHGRFGARG), are a transit peptide targeting the mitochondrion. Positions 43-207 (MVWVDLEMTG…DDISESIKEL (165 aa)) constitute an Exonuclease domain. Residues Asp-47 and Glu-49 each contribute to the Mg(2+) site. The residue at position 92 (Ser-92) is a Phosphoserine. Tyr-122 bears the Phosphotyrosine mark. Asp-147 lines the Mg(2+) pocket. Residue Lys-173 is modified to N6-acetyllysine. Residue His-194 is part of the active site. Residue Asp-199 participates in Mg(2+) binding.

Belongs to the oligoribonuclease family. In terms of assembly, homodimer. Homotetramer. It depends on Mn(2+) as a cofactor. Mg(2+) serves as cofactor. Highly expressed in the heart and at lower levels in the lymph nodes, brain, lung, liver, spleen and thymus.

It is found in the mitochondrion intermembrane space. It localises to the mitochondrion matrix. Its subcellular location is the mitochondrion. The protein resides in the cytoplasm. The protein localises to the nucleus. With respect to regulation, inhibited by adenosine 3',5'-bisphosphate. 3'-to-5'exoribonuclease that preferentially degrades DNA and RNA oligonucleotides composed of only two nucleotides. Binds and degrades longer oligonucleotides with a lower affinity. Plays dual roles in mitochondria, scavenging nanoRNAs (small RNA oligonucleotides of &lt;5 nucleotides) that are produced by the degradosome and clearing short RNAs that are generated by RNA processing. Essential for correct initiation of mitochondrial transcription, degrading mitochondrial RNA dinucleotides to prevent RNA-primed transcription at non-canonical sites in the mitochondrial genome. Essential for embryonic development. Its function is as follows. 3'-to-5'exoribonuclease that preferentially degrades DNA and RNA oligonucleotides composed of only two nucleotides. The sequence is that of Oligoribonuclease, mitochondrial (REXO2) from Homo sapiens (Human).